A 279-amino-acid polypeptide reads, in one-letter code: Zinc finger CCCH domain-containing protein 42 (279 aa).

Residues Ser11–Pro77 form a disordered region. Residues Ser16 to Ser39 are compositionally biased toward low complexity. C3H1-type zinc fingers lie at residues Arg79–Lys107, Arg120–Asp148, and Arg186–Ser214.

The sequence is that of Zinc finger CCCH domain-containing protein 42 from Oryza sativa subsp. japonica (Rice).